The following is a 437-amino-acid chain: Enolase (437 aa).

Gln-162 provides a ligand contact to (2R)-2-phosphoglycerate. Residue Glu-204 is the Proton donor of the active site. Mg(2+)-binding residues include Asp-251, Glu-297, and Asp-324. (2R)-2-phosphoglycerate contacts are provided by Lys-349, Arg-378, Ser-379, and Lys-400. Lys-349 acts as the Proton acceptor in catalysis.

The protein belongs to the enolase family. It depends on Mg(2+) as a cofactor.

Its subcellular location is the cytoplasm. It localises to the secreted. It is found in the cell surface. It carries out the reaction (2R)-2-phosphoglycerate = phosphoenolpyruvate + H2O. It participates in carbohydrate degradation; glycolysis; pyruvate from D-glyceraldehyde 3-phosphate: step 4/5. Catalyzes the reversible conversion of 2-phosphoglycerate (2-PG) into phosphoenolpyruvate (PEP). It is essential for the degradation of carbohydrates via glycolysis. In Chlorobium limicola (strain DSM 245 / NBRC 103803 / 6330), this protein is Enolase.